The primary structure comprises 277 residues: Digeranylgeranylglyceryl phosphate synthase (277 aa).

A run of 7 helical transmembrane segments spans residues 16–36 (ILAGIVGILGALVAYEGIPDI), 84–104 (ALYYALLQYAIGSILAYFLNI), 107–127 (FVFATIAYFLTFLYGWKLKPL), 146–166 (GAIGVGRIGLAGYLAICAFLV), 200–220 (AIIAAIFGFLTVIASFLPVKV), 221–241 (GIGLGYAPIIIVDIIIIKASI), and 257–277 (LKIATFVAVISFLAGALTKGV).

It belongs to the UbiA prenyltransferase family. DGGGP synthase subfamily. It depends on Mg(2+) as a cofactor.

It localises to the cell membrane. It carries out the reaction sn-3-O-(geranylgeranyl)glycerol 1-phosphate + (2E,6E,10E)-geranylgeranyl diphosphate = 2,3-bis-O-(geranylgeranyl)-sn-glycerol 1-phosphate + diphosphate. It participates in membrane lipid metabolism; glycerophospholipid metabolism. Functionally, prenyltransferase that catalyzes the transfer of the geranylgeranyl moiety of geranylgeranyl diphosphate (GGPP) to the C2 hydroxyl of (S)-3-O-geranylgeranylglyceryl phosphate (GGGP). This reaction is the second ether-bond-formation step in the biosynthesis of archaeal membrane lipids. The chain is Digeranylgeranylglyceryl phosphate synthase from Pyrococcus furiosus (strain ATCC 43587 / DSM 3638 / JCM 8422 / Vc1).